The chain runs to 679 residues: NADPH--cytochrome P450 reductase (679 aa).

The Lumenal portion of the chain corresponds to 1 to 21; that stretch reads MADSHGDTGATMPEAAAQEAS. The helical transmembrane segment at 22-42 threads the bilayer; the sequence is VFSMTDVVLFSLIVGLITYWF. Residues 43-679 lie on the Cytoplasmic side of the membrane; it reads LFRKKKEEVP…KGRYSLDVWS (637 aa). Phosphoserine is present on Ser64. Residues 81–225 form the Flavodoxin-like domain; that stretch reads IVVFYGSQTG…DFITWREQFW (145 aa). Residues 87-92, 139-142, 174-183, and Asp209 each bind FMN; these read SQTGTA, ATYG, and LGNKTYEHFN. The FAD-binding FR-type domain occupies 280–522; the sequence is KNPFLATVTT…FVRKSQFRLP (243 aa). Arg299 is an NADP(+) binding site. FAD-binding positions include Arg425, 455–458, 473–475, Tyr479, and 489–492; these read RYYS, CAV, and GVAT. Residues Thr536, 597–598, 603–607, and Asp640 each bind NADP(+); these read SR and KVYVQ. Trp678 serves as a coordination point for FAD.

This sequence belongs to the NADPH--cytochrome P450 reductase family. It in the N-terminal section; belongs to the flavodoxin family. In the C-terminal section; belongs to the flavoprotein pyridine nucleotide cytochrome reductase family. FAD is required as a cofactor. FMN serves as cofactor.

It is found in the endoplasmic reticulum membrane. It catalyses the reaction 2 oxidized [cytochrome P450] + NADPH = 2 reduced [cytochrome P450] + NADP(+) + H(+). Functionally, this enzyme is required for electron transfer from NADP to cytochrome P450 in microsomes. It can also provide electron transfer to heme oxygenase and cytochrome B5. In Oryctolagus cuniculus (Rabbit), this protein is NADPH--cytochrome P450 reductase.